Reading from the N-terminus, the 10624-residue chain is MNYRDKIQKFSIRKYTVGTFSTVIATLVFLGFNTSQAHAAETNQPASVVKQKQQSNNEQTENRESQVQNSQNSQNSQSLSATHENEQPNNSQANLVNQKVAQSSTTNDEQPASQNVNTKKDSATAATTQPDKEESKHKQNESQSANKNGNDNRAAHVENHEANVVTASDSSDNGNVQHDRNELQAFFDANYHDYRFIDRENADSGTFNYVKGIFDKINTLLGSNDPINNKDLQLAYKELEQAVALIRTMPQRQQTSRRSNRIQTRSVESRAAEPRSVSDYQNANSSYYVENANDGSGYPVGTYINASSKGAPYNLPTTPWNTLKASDSKEIALMTAKQTGDGYQWVIKFNKGHAPHQNMIFWFALPADQVPVGRTDFVTVNSDGTNVQWSHGAGAGANKPLQQMWEYGVNDPDRSHDFKIRNRSGQVIYSWPTVHVYSLEDLSRASDYFSEAGATPATKAFGRQNFEYINGQKPAESPGVPKVYTFIGQGDASYTISFKTQGPTVNKLYYAAGGRALEYNQLFMYSQLYVESTQDHQQRLNGLRQVVNRTYRIGTTKRVEVSQGNVQTKKVLESTNLNIDDFVDDPLSYVKTPSNKVLGFYPTNANTNAFRPGGVQELNEYQLSQLFTDQKLQEAARTRNPIRLMIGFDYPDGYGNSETLVPVNLTVLPEIQHNIKFFKNDDTQNIAEKPFSKQAGHPVFYVYAGNQGNASVNLGGSVTSIQPLRINLTSNENFTDKGWQITGIPRTLHIENSTNRTNNARERNIELVGNLLPGDYFGTIRFGRKEQLFEIRVKPHTPTITTTAEQLRGTALQKVPVNISGIPLDPSALVYLVAPTNQTTNGGSEADQIPSGYTILATGTPDGVHNTVTIRPQDYVVFIPPVGKQIRAVVYYNKVVASNMSNAVTILPDDIPPTINNPVGINAKYYRGDEVNFTMGVSDRHSGIKNTTITTLPSGWTSNLTKSDNKNGSLAITGRVSMNQAFNSDITFKVSATDNVNNTTNDSQSKHVSIHVGKISEDAHPIVLGNTEKVVVVNPTAVSNDEKQSIITAFMNKNQNIRGYLASTDPVTVDNNGNVTLHYRDGSSTTLDATNVMTYEPVVKSEYQTANAAKTATVTIAKGQSFNIGDIKQYFTLSNGQAIPNGTFTNITSDRTIPTAQEVSQMNAGTQLYHIVASNAYHKDTEDFYISLKIVDVKQPEGDQRVYRTSTYDLTTDEISKVKQAFINANRDVITLAEGDISVTNTPNGANVSTITVNINKGRLTKSFASNLANMNFLRWVNFPQDYTVTWTNAKIANRPTDGGLSWSDDHKSLIYRYDATLGTQITTNDILTMLKATTTVPGLRNNITGNEKAQAEAGGRPNYRTTGYSQSNATTDGQRQFTLNGQVIQILDIINPSNGYGGQPVTNSNTRANHSNSTVVNVNEPAANGAGAFTIDHVVKSNSTHNASDAVYKAQLYLTPYGPKQYVEHLNQNTGNTTDAINIYFVPSDLVNPTISVGNYTNHQVFSGETFTNTITANDNFGVQSVTVPNTSQITGTVDNNHQHVSATAPNVTSATSKTINLLATDTSGNTATTSFNVTVKPLRDKYRVGTSSTAANPVRIANISNNATVSQADQTTIINSLTFTSNAPNRNYATASANEITSKTVSNVSRTGNNANVTVTVTHQDGTTSTVTVPVKHVIPEIVAHSHYTVQGQDFPAGNGSSAADYFKLSNGSAIPDATITWVSGQAPNKDNTRIGEDITVTAHILIDGETTPITKTATYKVVRTVPKHVFETARGVLYPGVSDMYDAKQYVKPVNNSWSTNAQHMNFQFVGTYGPNKDVVGISTRLIRVTYDNRQTEDLTILSKVKPDPPRIDANSVTYKAGLTNQEIKVNNVLNNSSVKLFKADNTPLNVTNITHGSGFSSVVTVSDALPNGGIKAKSSISMNNVTYTTQDEHGQVVTVTRNESVDSNDSASVTVTPQLQATTEGAVFIKGGDGFDFGHVERFIQNPPHGATVAWHDSPDTWKNTVGNTHKTAVVTLPSGQGTRNVEVPVKVYPVANAKAPSRDVKGQNLTHGTNAIDYITFDPNTNTNGITAAWANRQQPNNQQAGVQHLNVDVTYPGISAAKRVPVTVNVYQFEFPQTTYTTTVGGTLASGTQASGYAHMQNASGLPTDGFTYKWNRDTTGTNDANWAAMNKPNTAQVVNAKYDVIYNGHTFATSLPAKFVVKDVQPAKPTVTETAAGAITIAPGANQTVNTHAGNVTTYADKLVIKRNGNVVTTFTRRNNTSPWVKEASADNVTGIVGTNNGITVAAGTFNPADTIQVVATQGSGETISDEQRSDDFTVVAPQPNQATTKIWQNGHIDITPNNPSGHLINPTQAMDIAYTEKVGNGAEHSKTINVVRGQNNQWTIANKPDYVTLDAQTGKVTFNANTIKPNSSITITPKAGTGHSVSSNPSTLTAPAAHTVNTTEIVKDYGSNVTAAEINNAVQVANKRTATIKNGTAMPTNLAGGSTTTIPVTVTYNDGSTEEVQESIFTKADKRELITAKNHLDDPVSTEGKKPGTITQYNNAMHNAQQQINTAKTEAQQVINNERATPQQVSDALTKVRAAQTKIDQAKALLQNKEDNSQLVTSKNNLQSSVNQVPSTAGMTQQSIDNYNAKKREAETEITAAQRVIDNGDATAQQISDEKHRVDNALTALNQAKHDLTADTHALEQAVQQLNRTGTTTGKKPASITAYNNSIRALQSDLTSAKNSANAIIQKPIRTVQEVQSALTNVNRVNERLTQAINQLVPLADNSALRTAKTKLDEEINKSVTTDGMTQSSIQAYENAKRAGQTETTNAQNVINNGDATDQQIAAEKTKVEEKYNSLKQAIAGLTPDLAPLQTAKTQLQNDIDQPTSTTGMTSASVAAFNDKLSAARTKIQEIDRVLASHPDVATIRQNVTAANAAKTALDQARNGLTVDKAPLENAKNQLQHSIDTQTSTTGMTQDSINAYNAKLTAARNKVQQINQVLAGSPTVDQINTNTSAANQAKSDLDHARQALTPDKAPLQNAKTQLEQSINQPTDTTGMTTASLNAYNQKLQAARQKLTEINQVLNGNPTVQNINDKVAEANQAKDQLNTARQGLTLDRQPALTTLHGASNLNQAQQNNFTQQINAAQNHAALETIKSNITALNTAMTKLKDSVADNNTIKSGQNYTDATPANKQAYDNAVNAAKGVIGETTNPTMDVNTVNQKAASVKSTKDALDGQQNLQRAKTEATNAITHASDLNQAQKNALTQQVNSAQNVQAVNDIKQTTQSLNTAMTGLKRGVANHNQVVQSDNYVNADTNKKNDYNNAYNHANDIINGNAQHPVITPSDVNNALSNVTSKEHALNGEAKLNAAKQEANTALGHLNNLNNVQRQNLQSQINGAHQIDAVNTIKQNATNLNSAMGNLRQAVADKDQVKRTEDYADADTAKQNAYNSAVSSAETIINQTANPTMSVDDVNRATSAVTTNKSALNGDEKLVQSKTDAARAIDALPHLNNAQKADVKSKINAASNIAGVNTVKQQGTDLNTAMGNLQGAINDEQTTLNSQNYQDATPSKKTAYTNAVQAAKDILNKSNGQNKTKDQVTEAMNQVNSAKNNLDGTRLLDQAKQTAKQQLNNMTHLTTAQKTNLTNQINSGTTVAGVHTVQSNANTLDQAMNTLRQSIANNDATKASEDYVDANNDKQTAYNNAVAAAETIINANSNPEMNPSTITQKAEQVNSSKTALNGDENLATAKQNAKTYLNTLTSITDAQKNNLISQISSATRVSGVDTVKQNAQHLDQAMANLQNGINNESQVKSSEKYRDADTNKQQEYDNAITAAKAILNKSTGPNTAQNAVEAALQRVNTAKDALNGDAKLIAAQNAAKQHLGTLTHITTAQRNDLTNQISQATNLAGVESVKQSANSLDGAMGNLQTAINDKSGTLASQNFLDADEQKRNAYNQAISAAETILNKQTGPNTAKTAVEQALNNVNSAKHALNGTQNLNNAKQAAITAINGASDLNQKQKDALKAQANGAQRVSNANDVQRNATELNTAMGQLQHAIADKTNTLASSKYVNADSTKQNAYTTKVTNAEHIISGTPTVVTTPSEVTAAANQVNSAKQELNGDERLRVAKQNANTAIDALTQLNTPQKAKLKEQVGQANRLEDVQSVQTNGQSLNNAMKGLRYSIANETTVKASQNYTDASPNNQSTYNSAVSNAKGIINQTNNPTMDTSAITQATTQVNNAKNGLNGAENLRNAQNTAKQNLNTLSHLTNNQKSAISSQIDRAGHVSEVTAAKNAATELNAQMGNLEQAIHDQNTVKQGVNFTDADKAKRDAYTNAVSRAETILNKTQGANTSKQDVEAAIQNVTSAKNALNGDQNVTNAKNAAKNALNNLTSINNAQKRDLTTKIDQATTVAGVEAVSNTGTQLNTAMANLQNGINDKANTLASENYHDADSDKKTAYTQAVTNAENILNKNSGSNLDKAAVENALSQVTNAKGALNGNHNLEQAKSNANTTINGLQHLTTAQKDKLKQQVQQAQNVAGVDTVKSSANTLNGAMGTLRNSIQDNTATKNGQNYLDATERNKTNYNNAVDSANGVINATSNPNMDANAINQIATQVTSTKNALDGTHNLTQAKQTATNAIDGATNLNKAQKDALKAQVTSAQRVANVTSIQQTANELNTAMGQLQHGIDDENATKQTQKYRDAEQSKKTAYDQAVAAAKAILNKQTGSNSDKAAVDRALQQVTSTKDALNGDAKLAEAKAAARQNLGTLNHITNAQRTALEGQINQATTVDGVNTVKTNANTLDGAMNSLQGAINDKDATLRNQNYLDADESKRNAYTQAVTAAEGILNKQTGGNTSKADVDNALNAVTRAKAALNGAENLRNAKTSATNTINGLPNLTQLQKDNLKHQVEQAQNVVGVNGVKDKGNTLNTAMGALRTSIQNDNTTKTSQNYLDASDSNKNNYNTAVNNANGVINATNNPNMDANAINDMANQVNTTKAALNGAQNLAQAKTNATNTINNAQDLNQKQKDALKTQVNNAQRVSDANNVQHTATELNGAMTALKAAIADKERTKASGNYVNADQEKRQAYDSKVTNAENIINGTPNATLTVNDVNSAASQVNAAKTALNGDNNLRVAKEHANNTIDGLAQLNNVQKAKLKEQVQSATTLDGVQTVKNSSQTLNTAMKGLRDSIANEATIKAGQNYTDASPNNRNEYDSAVTAAKAIINQTSNPTMEPNTITQATSQVTTKEHALNGAQNLAQAKTTAKNNLNNLTSINNAQKDALTRNIDGATTVAGVNQETAKATELNNAMHSLQNGINDETQTKQTQKYLDAEPSKKSAYDQAVNAAKAILTKASGQNVDKAAVEQALQNVNSTKTALNGDAKLNEAKAAAKQTLGTLTHINNAQRNALDNEITQATNVEGVNTVKAKAQQLDGAMGQLETSIRDKDTTLQSQNYQDADDAKRTAYSQAVNAAATILNKTAGGNTPKADVERAMQAVTQANTALNGIQNLERAKQAANTAITNASDLNTKQKEALKAQVTSAGRVSAANGVEHTATELNTAMTALKRAIADKADTKASGNYVNADANKRQAYDEKVTAAEHIVSGTPTPTLTPSDVTNAATQVTNAKTQLNGNHNLEVAKQNANTAIDGLTSLNGPQKAKLKEQVGQATTLPNVQTVRDNAQTLNTAMKGLRDSIANEATIKAGQNYTDASQNKQNDYNNAVTAAKAIIGQTTSPSMIAQEINQAKDQVTAKQQALNGQENLRTAQTNAKQHLNGLSDLTNAQKDAAKRQIEGATHVNEVTQAQNNADALNTAMTNLKNGIQDQNTIKQGVNFTDADEAKRNAYTNAVTQAEQILNKAQGPNTAKDGVETALQNVQRAKNELNGNQNVANAKTTAKNALNNLTSINNAQKAALKSQIEGATTVAGVNQVSTMASELNTAMSNLQRGINDEAATKAAQKYTEADRDKQTAYNDAVTAAKTLLDKTAGSNDNKVAVEQALQRVNTAKTALNGDARLNEAKNTAKQQLATMSHLTNAQKANLTEQIERGTTVAGVQGIQANAGTLNQAMNQLRQSIASKDATKSSEDYQDANADLQNAYNDAVTNAEGIISATNNPEMNPDTINQKASQVNSAKSALNGDEKLAAAKQTAKSDIGRLTDLNNAQRTAANAEVDQAPNLAAVTAAKNKATSLNTAMGNLKHALAEKDNTKRSVNYTDADQPKQQAYDTAVTQAEAITNANGSNANETQVQAALNQLNQAKNDLNGDNKVAQAKETAKRALASYSNLNNAQSTAATSQIDNATTVADVTAAQNTANELNTAMGQLQNGINDQNTVKQQVNFTDADQGKKDAYTNAVTNAQGILDKANGQNMTKAQVEAALNQVTTAKNALNGDANVRQAKSDAKANLGTLTHLNNAQKQDLTSQIEGATTVNGVNSVKTKAQDLDGAMQRLESAIANKDQTKASENYIDADPTKKTAFDNAITQAESYLNKDHGTNKDKQAVEQAIQSVTSTENALNGDANLQCAKTEATQAIDNLTQLNTPQKTALKQQVNAAQRVSGVTDLKNSATSLNNAMDQLKQAIGDHDTIVAGGNYTNASPDKQGAYTDAYNAAKNIVNGSPNVITNAADVTAATQRVNNAETSLNGDTNLATAKQQAKDALRQMTHLSDAQKQSITGQIDSATQVTGVQSVKDNATNLDNAMNQLRNSIANKDEVKASQPYVDADTDKQNAYNTAVTSAENIINATSQPTLDPSAVTQAANQVNTNKTALNGAQNLANKKQETTANINRLSHLNNAQKQDLNTQVTNAPNISTVNQVKTKAEQLDQAMERLINGIQDKDQVKQSVNFTDADPEKQTAYNNAVTAAENIINQANGTNANQSQVEAALSTVTTTKQALNGDRKVTDAKNNANQTLSTLDNLNNAQKGAVTGNINQAHTVAEVTQAIQTAQELNTAMGNLKNSLNDKDTTLGSQNFADADPEKKNAYNEAVRNAENILNKSTGTNVPKDQVEAAMNQVNTTKAALNGTQNLEKAKQHANTAIDGLSHLTNAQKEALKQLVQQSTTVAEAQGNEQKANNVDAAMDKLRQSIADNATTKQNQNYTDASPNKKDAYNNAVTTAQGIIDQTTNPSLDPTVINQAAGQVSTSKNALNGNENLEAAKQQATQSLGSLDNLNNAQKQAVTNQINGAHTVDEANQIKQNAQNLNTAMGNLKQAIADKDATKATVNFTDADQAKQQAYNTAVTNAENIISKANGGNATQTEVEQAIQQVNAAKQALNGNANVQHAKDEATALINNSNDLNQAQKDALKQQVQNATTVAGVNNVKQTAQELNNAMTQLKQGIADKEQTKADGNFVNADSDKQNAYNQAVAKAEALISGTPDVVVTPSEITAALNKVTQAKNDLNGNTNLATAKQNVQHAIDQLPNLNQAQRDEYSKQITQATLVPNVNAIQQAATTLNDAMTQLKQGIANKAQIKGSENYHDADTDKQTAYDNAVTKAEELLKQTTNPTMDPNTIQQALTKVNDTNQALNGNQKLADAKQDAKTTLGTLDHLNDAQKQALTTQVEQAPDIATVNNVKQNAQNLNNAMTNLNNALQDKTETLNSINFTDADQAKKDDYTNAVSHAEGILSKANGSNASQTEVEQAMQRVNEAKQALNGNDNVQRAKDAAKQVITNANDLNQAQKDALKQQVDAAQTVANVNTIKQTAQDLNQAMTQLKQGIADKDQTKANGNFVNADTDKQNAYNNAVAHAEQIISGTPNANVDPQQVAQALQQVNQAKGDLNGNHNLQVAKDNANTAIDQLPNLNQPQKTALKDQVSHAELVTGVNAIKQNADALNNAMGTLKQQIQANSQVPQSVDFTQADQDKQQAYNNAANQAQQIANGTPTPVLAPDTVTKAVTTMNQAKDALNGDEKLAQAKQDALANLDTLRDLNQPQRDALRNQINQAQALATVEQTKQNAQNVNTAMGNLKQGIANKDTVKASENYHDADVDKQTAYTNAVSQAEGIINQTTNPTLNPDDITRALTQVTDAKNSLNGEAKLATEKQNAKDAVSGMTHLNDAQKQALKGQIDQSPEIATVNQVKQTATSLDQAMDQLSQAINDKDQILADGNYLNADPDKQNAYKQAVAKAEALLNKQSGTNEVQAQVESITNEVNAAKQALNGNDNLANAKQQAKQQLANLTHLNDAQKQSFESQITQAPLVTDVTTINQKAQTLDHAMELLRNSVADNQTTLASEDYHDATAQRQNDYNKAVTAANNIINQTTSPTMNPDDVNGATTQVNNTKVALDGDENLAAAKQQANNRLDQLDHLNNAQKQQLQSQITQSSDIAAVNGHKQTAESLNTAMGNLINAIADHQAVEQRGNFINADTDKQTAYNTAVNEAAAMINKQTGQNANQTEVEQAITKVQTTLQALNGDHNLQVAKTNATQAIDALTSLNDPQKTALKDQVTAATLVTAVHQIEQNANTLNQAMHGLRQSIQDNAATKANSKYINEDQPEQQNYDQAVQAANNIINEQTATLDNNAINQVAATVNTTKAALHGDVKLQNDKDHAKQTVSQLAHLNNAQKHMEDTLIDSETTRTAVKQDLTEVQALDQLMDALQQSIADKDATRASSAYVNAEPNKKQAYDEAVQNAESIIAGLNNPTINKGNVSSATQAVISSKNALDGVERLAQDKQTAGNSLNHLDQLTPAQQQALENQINNATTRDKVAEIIAQAQALNEAMKALKESIKDQPQTEASSKFINEDQAQKDAYTQAVQHAKDLINKTTDPTLAKSIIDQATQAVTDAKNNLHGDQKLAQDKQRATETLNNLSNLNTPQRQALENQINNAATRGEVAQKLTEAQALNQAMEALRNSIQDQQQTESGSKFINEDKPQKDAYQAAVQNAKDLINQTGNPTLDKAQVEQLTHAFKQAKDNLHGDQKLADDKQHAVTDLNQLNGLNNPQRQALESQINNAATRGEVAQKLAEAKALDQAMQALRNSIQDQQQTEAGSKFINEDKPQKDAYQAAVQNAKDLINQTGNPTLDKSQVEQLTQAVTTAKDNLHGDQKLARDQQQAVTTVNALPNLNHAQQQTLTDAINAAPTRTEVAQHVQTATELDHAMETLKNKVDQVNTDKAQPNYTEASTDKKEAVDQALQAAQSITDPTNGSNANKDAVEQALTKLQEKVNELNGNERVAEAKTQAKQTIDQLTHLNADQIATAKQNIDQATKLQPIAELVDQATQLNQSMDQLQQAVNEHANVEQTIDYTQADSDKQKAYKQAIADAENVLKQNANKQQVDQALQNILNAKQALNGDERVALAKTNGKHDIDQLNALNNAQQDGFKGRIDQSNDLNQIQQIVDEAKALNRAMDQLSQEITGNEGRTKGSTNYVNADTQVKQVYDEAVDKAKQALDKSSGQNLTAEQVIKLNDAVTAAKKALNGEERLNNRKAEALQRLDQLTHLNNAQRQLAIQQINNAETLNKASRAINRATKLDNAMGAVQQYIDEQHLGVISSTNYINADDNLKANYDNAIANAAHELDKVQGNAIAKAEAEQLKQNIIDAQNALNGDQNLANAKDKANAFVNSLNGLNQQQQDLAHKAINNADTVSDVTDIVNNQIDLNDAMETLKHLVDNEIPNAEQTVNYQNADDNAKTNFDDAKRLANTLLNSDNTNVNDINGAIQAVNDAIHNLNGDQRLQDAKDKAIQSINQALANKLKEIEASNATDQDKLIAKNKAEELANSIINNINKATSNQAVSQVQTAGNHAIEQVHANEIPKAKIDANKDVDKQVQALIDEIDRNPNLTDKEKQALKDRINQILQQGHNDINNALTKEEIEQAKAQLAQALQDIKDLVKAKEDAKQDVDKQVQALIDEIDQNPNLTDKEKQALKDRINQILQQGHNGINNAMTKEEIEQAKAQLAQALKEIKDLVKAKENAKQDVDKQVQALIDEIDQNPNLTDKEKQALKDRINQILQQGHNDINNAMTKEEIEQAKAQLAQALQDIKDLVKAKEDAKNAIKALANAKRDQINSNPDLTPEQKAKALKEIDEAEKRALQNVENAQTIDQLNRGLNLGLDDIRNTHVWEVDEQPAVNEIFEATPEQILVNGELIVHRDDIITEQDILAHINLIDQLSAEVIDTPSTATISDSLTAKVEVTLLDGSKVIVNVPVKVVEKELSVVKQQAIESIENAAQQKIDEINNSVTLTLEQKEAAIAEVNKLKQQAIDHVNNAPDVHSVEEIQQQEQAYIEQFNPEQFTIEQAKSNAIKSIEDAIQHMIDEIKARTDLTDKEKQEAIAKLNQLKEQAIQAIQRAQSISEITEQLEQFKAQMKAANPTAKELAKRKQEAISRIKDFSNEKINSIRNSEIGTADEKQAAMNQINEIVLETIRDINNAHTLQQVEAALNNGIARISAVQIVISDRAKQSSSTGNESNSHLTIGYGTANHPFNSSTIGHKKKLDEDDDIDPLHMRHFSNNFGNVIKNAIGVVGISGLLASFWFFIAKRRRKEDEEEELEIRDNNKDSIKETLDDTKHLPLLFAKRRRKEDEEDVTVEEKDSLNNGESLDKVKHTPFFLPKRRRKEDEEDVEVTNENTDEKVLKDNEHSPLLFAKRRKDKEEDVETTTSIESKDEDVPLLLAKKKNQKDNQSKDKKSASKNTSKKVAAKKKKKKSKKNKK.

A signal peptide spans 1–39 (MNYRDKIQKFSIRKYTVGTFSTVIATLVFLGFNTSQAHA). Positions 41 to 59 (ETNQPASVVKQKQQSNNEQ) are enriched in polar residues. Disordered regions lie at residues 41-152 (ETNQ…GNDN), 250-277 (PQRQQTSRRSNRIQTRSVESRAAEPRSV), 1347-1372 (NEKAQAEAGGRPNYRTTGYSQSNATT), and 2418-2438 (TITPKAGTGHSVSSNPSTLTA). Low complexity predominate over residues 65–78 (SQVQNSQNSQNSQS). Residues 79–117 (LSATHENEQPNNSQANLVNQKVAQSSTTNDEQPASQNVN) are compositionally biased toward polar residues. Over residues 130-140 (PDKEESKHKQN) the composition is skewed to basic and acidic residues. 4 stretches are compositionally biased toward polar residues: residues 141–151 (ESQSANKNGND), 250–266 (PQRQQTSRRSNRIQTRS), 1360–1372 (YRTTGYSQSNATT), and 2427–2438 (HSVSSNPSTLTA). FIVAR domains follow at residues 2524–2580 (AKNH…VSDA), 2610–2666 (SKNN…ISDE), 2687–2750 (DTHA…VQSA), 2780–2836 (AKTK…IAAE), 2864–2919 (AKTQ…IRQN), 2947–3002 (AKNQ…INTN), 3030–3085 (AKTQ…INDK), 3154–3212 (AMTK…VNQK), 3280–3339 (AMTG…VNNA), 3407–3465 (AMGN…VNRA), 3533–3591 (AMGN…VTEA), 3659–3717 (AMNT…ITQK), 3785–3843 (AMAN…VEAA), 3911–3969 (AMGN…VEQA), 4037–4095 (AMGQ…VTAA), 4163–4221 (AMKG…ITQA), 4289–4347 (QMGN…VEAA), 4415–4473 (AMAN…VENA), 4541–4599 (AMGT…INQI), 4667–4725 (AMGQ…VDRA), 4793–4851 (AMNS…VDNA), 4919–4977 (AMGA…INDM), 5045–5103 (AMTA…VNSA), 5171–5229 (AMKG…ITQA), 5297–5355 (AMHS…VEQA), 5423–5481 (AMGQ…VERA), 5549–5607 (AMTA…VTNA), 5675–5733 (AMKG…INQA), 5801–5859 (AMTN…VETA), 6053–6111 (AMNQ…INQK), 6179–6236 (AMGN…VQAA), 6304–6362 (AMGQ…VEAA), 6430–6488 (AMQR…VEQA), 6556–6614 (AMDQ…VTAA), 6682–6740 (AMNQ…VTQA), 6808–6866 (AMER…VEAA), 6934–6992 (AMGN…VEAA), 7060–7118 (AMDK…INQA), 7186–7244 (AMGN…VEQA), 7312–7370 (AMTQ…ITAA), 7438–7496 (AMTQ…IQQA), 7564–7622 (AMTN…VEQA), 7690–7748 (AMTQ…VAQA), 7816–7874 (AMGT…VTKA), 7942–8000 (AMGN…ITRA), 8068–8129 (AMDQ…ITNE), 8194–8252 (AMEL…VNGA), 8320–8378 (AMGN…VEQA), 8446–8503 (AMHG…INQV), 8571–8629 (LMDA…VSSA), 8697–8755 (AMKA…IDQA), 8823–8881 (AMEA…VEQL), 8949–9007 (AMQA…VEQL), 9075–9133 (AMET…VEQA), 9201–9255 (SMDQ…VDQA), 9323–9382 (AMDQ…VIKL), and 9577–9633 (AMET…INGA). Residues 10430 to 10450 (IKNAIGVVGISGLLASFWFFI) form a helical membrane-spanning segment. Residues 10527 to 10624 (RRKEDEEDVE…KKKKSKKNKK (98 aa)) form a disordered region. 2 stretches are compositionally biased toward basic and acidic residues: residues 10542–10552 (TDEKVLKDNEH) and 10591–10601 (QKDNQSKDKKS). Over residues 10606-10624 (TSKKVAAKKKKKKSKKNKK) the composition is skewed to basic residues.

It localises to the cell membrane. In Staphylococcus aureus (strain JH1), this protein is Extracellular matrix-binding protein ebh (ebh).